A 984-amino-acid polypeptide reads, in one-letter code: Ubiquitin conjugation factor E4 ufd-2 (984 aa).

The U-box domain maps to 909–982 (DVPEEFKDPI…QEWICQKRNS (74 aa)).

It belongs to the ubiquitin conjugation factor E4 family. Forms a complex composed of deubiquitinating enzyme atx-3, E4 ubiquitin-protein ligase ufd-2 and cdc-48.1; within the complex interacts with atx-3 and cdc-48.1 (via DDDLYN motif). Forms a complex composed of cdc-48.1, myosin chaperone unc-45, ubiquitin-protein ligases ufd-2 and chn-1; the complex targets myosin chaperone unc-45 for proteasomal degradation; within the complex interacts with cdc-48.1 (via DDDLYN motif), chn-1 and unc-45. Forms a complex composed of unc-45 and myosin heavy chain B unc-54; the complex targets unfolded unc-54 for proteasomal degradation; within the complex interacts with unc-45 (via TPR domain) and unc-54. Interacts with cdc-48.2 (via DDDLYN motif). Expressed in the germline (at protein level).

It is found in the cytoplasm. Its subcellular location is the nucleus membrane. It localises to the nucleus. The protein resides in the nucleolus. It catalyses the reaction S-ubiquitinyl-[E2 ubiquitin-conjugating enzyme]-L-cysteine + [acceptor protein]-L-lysine = [E2 ubiquitin-conjugating enzyme]-L-cysteine + N(6)-ubiquitinyl-[acceptor protein]-L-lysine.. The protein operates within protein modification; protein ubiquitination. Acts as an E4 ubiquitin ligase mediating the assembly of polyubiquitin chains on substrates ubiquitinated by another E3 ubiquitin ligase. The elongation of preexisting ubiquitin chains preferentially targets ubiquitin 'Lys-29' and 'Lys-48' residues. Also functions as an E3 ligase in conjunction with specific E1 and E2 ligases. Probably by regulating protein ubiquitination at DNA damage repair sites, coordinates DNA double-strand-break repair and apoptosis in the germline. Required for germline apoptosis in response to DNA damage downstream of cep-1. Involved in the resolution of DNA-repair sites by promoting the release of rad-51 from DNA damage foci. In association with protein-ligase chn-1, acts as an E3/E4 ligase to poly-ubiquitinate lysine residues in the UCS domain of myosin chaperone unc-45. By targeting myosin chaperone unc-45 for proteasomal degradation, regulates myosin assembly in body wall muscles in association with cdc-48.1 and chn-1. However, in a contrasting study, acts as an E3 ligase, independently of chn-1, to poly-ubiquitinate unc-45 without promoting unc-45 proteasomal degradation. Instead, uses unc-45 as an adapter protein to recruit and poly-ubiquitinate unfolded myosin heavy chain B unc-54. This chain is Ubiquitin conjugation factor E4 ufd-2, found in Caenorhabditis elegans.